Here is a 354-residue protein sequence, read N- to C-terminus: tRNA N6-adenosine threonylcarbamoyltransferase (354 aa).

Histidine 115 and histidine 119 together coordinate Fe cation. Residues 138-142 (LVSGG), aspartate 171, glycine 184, and asparagine 276 each bind substrate. Residue aspartate 304 participates in Fe cation binding.

It belongs to the KAE1 / TsaD family. Fe(2+) serves as cofactor.

It localises to the cytoplasm. The enzyme catalyses L-threonylcarbamoyladenylate + adenosine(37) in tRNA = N(6)-L-threonylcarbamoyladenosine(37) in tRNA + AMP + H(+). Required for the formation of a threonylcarbamoyl group on adenosine at position 37 (t(6)A37) in tRNAs that read codons beginning with adenine. Is involved in the transfer of the threonylcarbamoyl moiety of threonylcarbamoyl-AMP (TC-AMP) to the N6 group of A37, together with TsaE and TsaB. TsaD likely plays a direct catalytic role in this reaction. In Xanthomonas campestris pv. campestris (strain 8004), this protein is tRNA N6-adenosine threonylcarbamoyltransferase.